The chain runs to 289 residues: Thymidylate synthase (289 aa).

Residues arginine 21 and arginine 150–arginine 151 each bind dUMP. Catalysis depends on cysteine 170, which acts as the Nucleophile. Residues arginine 191–aspartate 194, asparagine 202, and histidine 232–tyrosine 234 each bind dUMP. Aspartate 194 provides a ligand contact to (6R)-5,10-methylene-5,6,7,8-tetrahydrofolate. Position 288 (alanine 288) interacts with (6R)-5,10-methylene-5,6,7,8-tetrahydrofolate.

The protein belongs to the thymidylate synthase family. Bacterial-type ThyA subfamily. As to quaternary structure, homodimer.

The protein localises to the cytoplasm. The catalysed reaction is dUMP + (6R)-5,10-methylene-5,6,7,8-tetrahydrofolate = 7,8-dihydrofolate + dTMP. It participates in pyrimidine metabolism; dTTP biosynthesis. Catalyzes the reductive methylation of 2'-deoxyuridine-5'-monophosphate (dUMP) to 2'-deoxythymidine-5'-monophosphate (dTMP) while utilizing 5,10-methylenetetrahydrofolate (mTHF) as the methyl donor and reductant in the reaction, yielding dihydrofolate (DHF) as a by-product. This enzymatic reaction provides an intracellular de novo source of dTMP, an essential precursor for DNA biosynthesis. In Malacoplasma penetrans (strain HF-2) (Mycoplasma penetrans), this protein is Thymidylate synthase.